Reading from the N-terminus, the 399-residue chain is tRNA-specific 2-thiouridylase MnmA (399 aa).

Residues 18 to 25 (AMSGGVDS) and Leu-44 contribute to the ATP site. The active-site Nucleophile is the Cys-112. Cys-112 and Cys-213 are disulfide-bonded. Gly-136 lines the ATP pocket. An interaction with tRNA region spans residues 163 to 165 (RDQ). Cys-213 (cysteine persulfide intermediate) is an active-site residue.

It belongs to the MnmA/TRMU family.

It localises to the cytoplasm. The catalysed reaction is S-sulfanyl-L-cysteinyl-[protein] + uridine(34) in tRNA + AH2 + ATP = 2-thiouridine(34) in tRNA + L-cysteinyl-[protein] + A + AMP + diphosphate + H(+). In terms of biological role, catalyzes the 2-thiolation of uridine at the wobble position (U34) of tRNA, leading to the formation of s(2)U34. The protein is tRNA-specific 2-thiouridylase MnmA of Rhizobium rhizogenes (strain K84 / ATCC BAA-868) (Agrobacterium radiobacter).